Reading from the N-terminus, the 154-residue chain is tRNA-splicing endonuclease (154 aa).

Catalysis depends on residues Tyr86, His102, and Lys133.

This sequence belongs to the tRNA-intron endonuclease family. Archaeal short subfamily. Homotetramer; although the tetramer contains four active sites, only two participate in the cleavage. Therefore, it should be considered as a dimer of dimers.

The enzyme catalyses pretRNA = a 3'-half-tRNA molecule with a 5'-OH end + a 5'-half-tRNA molecule with a 2',3'-cyclic phosphate end + an intron with a 2',3'-cyclic phosphate and a 5'-hydroxyl terminus.. Endonuclease that removes tRNA introns. Cleaves pre-tRNA at the 5'- and 3'-splice sites to release the intron. The products are an intron and two tRNA half-molecules bearing 2',3' cyclic phosphate and 5'-OH termini. Recognizes a pseudosymmetric substrate in which 2 bulged loops of 3 bases are separated by a stem of 4 bp. The protein is tRNA-splicing endonuclease of Nanoarchaeum equitans (strain Kin4-M).